The chain runs to 230 residues: Flagellar L-ring protein (230 aa).

The N-terminal stretch at 1–21 (MMLKTVLRLPVCAALLALAAG) is a signal peptide. Residue Cys-22 is the site of N-palmitoyl cysteine attachment. The S-diacylglycerol cysteine moiety is linked to residue Cys-22. The segment at 34–53 (PLTAPPPPPPQPSARPNGSI) is disordered. Residues 36–46 (TAPPPPPPQPS) are compositionally biased toward pro residues.

It belongs to the FlgH family. As to quaternary structure, the basal body constitutes a major portion of the flagellar organelle and consists of four rings (L,P,S, and M) mounted on a central rod.

The protein localises to the cell outer membrane. The protein resides in the bacterial flagellum basal body. Assembles around the rod to form the L-ring and probably protects the motor/basal body from shearing forces during rotation. This Bordetella bronchiseptica (strain ATCC BAA-588 / NCTC 13252 / RB50) (Alcaligenes bronchisepticus) protein is Flagellar L-ring protein.